Here is a 405-residue protein sequence, read N- to C-terminus: MEIILGIVMFTVIVLVLALMILFAKSKLVSEGDITIKVNGEKELTMPAGGKLLGALANEGIFIPSACGGGGSCGQCRVVVKSGGGDILPTELSHISKREAREGCRLSCQVNVKTDMDIEVPEEVFGVKKWECTVISNDNKATFIKELKLAIPEGEEVPFRAGGYIQIEAPPHTVAYKDFDIPKEYHEDWDKYNLWQYVSKVDEPILRAYSMASYPEEKGIIMLNVRIATPPPRVPDAPPGQMSSYIWSLKPGDKVTISGPFGEFFAKDTDAEMVFIGGGAGMAPMRSHIFDQLKRLNSKRKITFWYGARSKREMFYVEDFDQLAAEFPNFTWHVALSDPLPEDNWDGYTGFIHNVVYENHLKNHEAPEDCEFYMCGPPIMNQSVIKMLKDLGVEDENILLDDFGG.

The helical transmembrane segment at 3–23 (IILGIVMFTVIVLVLALMILF) threads the bilayer. Residues 32–124 (GDITIKVNGE…DMDIEVPEEV (93 aa)) form the 2Fe-2S ferredoxin-type domain. [2Fe-2S] cluster-binding residues include Cys-67, Cys-73, Cys-76, and Cys-108. Residues 127–267 (VKKWECTVIS…SGPFGEFFAK (141 aa)) form the FAD-binding FR-type domain. Residues 270–387 (DAEMVFIGGG…PIMNQSVIKM (118 aa)) form a catalytic region.

It belongs to the NqrF family. In terms of assembly, composed of six subunits; NqrA, NqrB, NqrC, NqrD, NqrE and NqrF. Requires [2Fe-2S] cluster as cofactor. The cofactor is FAD.

The protein localises to the cell inner membrane. The enzyme catalyses a ubiquinone + n Na(+)(in) + NADH + H(+) = a ubiquinol + n Na(+)(out) + NAD(+). NQR complex catalyzes the reduction of ubiquinone-1 to ubiquinol by two successive reactions, coupled with the transport of Na(+) ions from the cytoplasm to the periplasm. The first step is catalyzed by NqrF, which accepts electrons from NADH and reduces ubiquinone-1 to ubisemiquinone by a one-electron transfer pathway. This chain is Na(+)-translocating NADH-quinone reductase subunit F, found in Neisseria meningitidis serogroup B (strain ATCC BAA-335 / MC58).